The sequence spans 292 residues: Protease HtpX (292 aa).

2 consecutive transmembrane segments (helical) span residues 5–25 and 34–54; these read IFLF…VMSV and SGLL…SLLL. A Zn(2+)-binding site is contributed by histidine 140. Glutamate 141 is a catalytic residue. Residue histidine 144 coordinates Zn(2+). A run of 2 helical transmembrane segments spans residues 155-175 and 193-213; these read LLQG…GGII and IIVF…AMWF. Glutamate 218 contacts Zn(2+).

It belongs to the peptidase M48B family. Requires Zn(2+) as cofactor.

It localises to the cell inner membrane. In Xanthomonas oryzae pv. oryzae (strain MAFF 311018), this protein is Protease HtpX.